The chain runs to 459 residues: GTPase Der (459 aa).

2 consecutive EngA-type G domains span residues 3–167 (FTLA…PEPV) and 188–363 (IRVA…AVWN). Residues 9–16 (GRPNVGKS), 56–60 (DTAGL), 119–122 (NKSE), 194–201 (GRPNAGKS), 241–245 (DTAGL), and 306–309 (NKWD) contribute to the GTP site. A KH-like domain is found at 364 to 448 (RRVPTAALNR…PVRITLREKA (85 aa)).

The protein belongs to the TRAFAC class TrmE-Era-EngA-EngB-Septin-like GTPase superfamily. EngA (Der) GTPase family. In terms of assembly, associates with the 50S ribosomal subunit.

Functionally, GTPase that plays an essential role in the late steps of ribosome biogenesis. The polypeptide is GTPase Der (Rhodopseudomonas palustris (strain TIE-1)).